The sequence spans 44 residues: Non-structural protein 7b (44 aa).

A helical transmembrane segment spans residues 9 to 29 (FYLCFLAFLLFLVLIMLIIFW).

The protein resides in the host membrane. This Bat coronavirus Rp3/2004 (BtCoV/Rp3/2004) protein is Non-structural protein 7b.